We begin with the raw amino-acid sequence, 451 residues long: Trigger factor (451 aa).

The PPIase FKBP-type domain maps to G163–P248.

The protein belongs to the FKBP-type PPIase family. Tig subfamily.

Its subcellular location is the cytoplasm. It catalyses the reaction [protein]-peptidylproline (omega=180) = [protein]-peptidylproline (omega=0). In terms of biological role, involved in protein export. Acts as a chaperone by maintaining the newly synthesized protein in an open conformation. Functions as a peptidyl-prolyl cis-trans isomerase. This chain is Trigger factor, found in Leptospira interrogans serogroup Icterohaemorrhagiae serovar copenhageni (strain Fiocruz L1-130).